The sequence spans 146 residues: UPF0178 protein Lin1493 (146 aa).

The protein belongs to the UPF0178 family.

The chain is UPF0178 protein Lin1493 from Listeria innocua serovar 6a (strain ATCC BAA-680 / CLIP 11262).